The chain runs to 283 residues: NAD kinase (283 aa).

Asp-68 functions as the Proton acceptor in the catalytic mechanism. NAD(+) is bound by residues Asp-68–Gly-69, Asn-142–Asp-143, Arg-153, Asp-172, Thr-183–Ser-188, and Gln-242.

The protein belongs to the NAD kinase family. A divalent metal cation serves as cofactor.

The protein localises to the cytoplasm. It catalyses the reaction NAD(+) + ATP = ADP + NADP(+) + H(+). Its function is as follows. Involved in the regulation of the intracellular balance of NAD and NADP, and is a key enzyme in the biosynthesis of NADP. Catalyzes specifically the phosphorylation on 2'-hydroxyl of the adenosine moiety of NAD to yield NADP. The chain is NAD kinase from Thermoanaerobacter pseudethanolicus (strain ATCC 33223 / 39E) (Clostridium thermohydrosulfuricum).